Reading from the N-terminus, the 276-residue chain is uncharacterized protein (276 aa).

The disordered stretch occupies residues 1 to 20 (MMSDEQHQGGDGQTTTNTNT).

This is an uncharacterized protein from Dictyostelium discoideum (Social amoeba).